The sequence spans 387 residues: MKKIYADLHIHIGRTFTGRAVKITGAKTLTLDRILVEASEHKGIELLGIIDCHSPEVILELEEGISSGKYRELDGGGIRYRSTTLLLGSELEIYDEACSGPIHVLVFMPTLADMKQFSNWLSARLKNIHLSSQRIYETGLNLQKKVQDMGGLFIPAHIFTPHKSLYGKGVKSSLTEVFDPSMIDAVELGLSCDTDMASHVSQLNPYPFLTNSDAHSLGKIGREYNELYVQSADFTEFALALKGQDDRKIIANYGLDPLLGKYYQTACEACGEPAVSGETACANCGKARFTKGVSDRLRELSDQLEVRVPRPRYVHQIPLQFVPGVGPKTLDKLKKAFGTEMAVLHEAAEEDLARVVPPKTAALIVKARSGKLELKAGGGGTYGKIKP.

To M.jannaschii MJ0043 N-terminal region.

This is an uncharacterized protein from Bacillus subtilis (strain 168).